The chain runs to 669 residues: MSDVAQRLTELRKTLHEHGVRYYVEDAPTIPDAEYDRLMRELLELEAAHPELMSSDSPSLRVGGRPLDAFESVVHEIPMLSLDNAFDDGELESFYRRMTDRIQAVQHSAFCCEPKLDGLAVSLLYENGVLTRAATRGDGMTGENITENVRTIKAIPLRLQGADFPTRLEVRGEVFMPKAGFEALNARALKKGEKQFVNPRNAAAGSLRQLDSKITAQRPLAFYAYSVGVIEGGELATSHYQRFLQLKGWGLPICPETKLVTSLAEVKAFYQDILQRRQFLAYEIDGVVIKVDDIQLQERLGFVARAPRWAIAYKFPAQEELTLLNDVEFQVGRTGAITPVAKLEPVFVGGVTVSNATLHNADEIERLGVMVGDTVVIRRAGDVIPQIVSVVLERRPENAKSIVFPTRCPVCQSDVERVEGEAVARCSGGLICQAQRKEALKHFVSRKAMDVEGLGDKVIEQLVDREMVSTPADLFRLRAGELTILERMGPKSAQNVIDALNKAKQTTLPKFLYALGIREVGDATALNLAQHFLSLEAIQQASLEQFIEVPDVGVVVASHLLAFFAQDRNQQVINELLEQGITWPALTAAPVAVDSALAGKIVVLTGSFTQLSRNDAKAALQALGAKVTGSVSKNTDIVFAGEAAGSKLAKATELGIQVFDEQALIEFLK.

Residues 32-36 (DAEYD), 81-82 (SL), and Glu113 each bind NAD(+). Catalysis depends on Lys115, which acts as the N6-AMP-lysine intermediate. Arg136, Glu173, Lys290, and Lys314 together coordinate NAD(+). Zn(2+) is bound by residues Cys408, Cys411, Cys426, and Cys432. Positions 592–669 (AVDSALAGKI…DEQALIEFLK (78 aa)) constitute a BRCT domain.

It belongs to the NAD-dependent DNA ligase family. LigA subfamily. The cofactor is Mg(2+). Mn(2+) serves as cofactor.

It carries out the reaction NAD(+) + (deoxyribonucleotide)n-3'-hydroxyl + 5'-phospho-(deoxyribonucleotide)m = (deoxyribonucleotide)n+m + AMP + beta-nicotinamide D-nucleotide.. Functionally, DNA ligase that catalyzes the formation of phosphodiester linkages between 5'-phosphoryl and 3'-hydroxyl groups in double-stranded DNA using NAD as a coenzyme and as the energy source for the reaction. It is essential for DNA replication and repair of damaged DNA. In Vibrio cholerae serotype O1 (strain ATCC 39541 / Classical Ogawa 395 / O395), this protein is DNA ligase.